Reading from the N-terminus, the 118-residue chain is Eukaryotic translation initiation factor 4E-binding protein 1 (118 aa).

Composition is skewed to polar residues over residues 1–12 and 34–48; these read MSGGSSCSQTPS and YSTT…TTPG. 2 disordered regions span residues 1–20 and 25–48; these read MSGG…ATRR and DGVQ…TTPG. An N-acetylserine modification is found at Ser-2. At Thr-37 the chain carries Phosphothreonine; by MTOR. Residue Thr-41 is modified to Phosphothreonine. The residue at position 44 (Ser-44) is a Phosphoserine. At Thr-46 the chain carries Phosphothreonine; by MTOR. Thr-50 is subject to Phosphothreonine. Position 54 is a phosphotyrosine (Tyr-54). Positions 54 to 60 match the YXXXXLphi motif motif; it reads YDRKFLM. Lys-57 participates in a covalent cross-link: Glycyl lysine isopeptide (Lys-Gly) (interchain with G-Cter in ubiquitin). A disordered region spans residues 64–118; sequence NSPVTKTPPRDLPTIPGVTSPSSDEPPMEASQSHLRNSPEDKRAGGEESQFEMDI. Residue Ser-65 is modified to Phosphoserine; by DYRK2, MAPK1, MAPK3 and MTOR. Thr-70 is modified (phosphothreonine; by MTOR). Residue Thr-77 is modified to Phosphothreonine. Residues Ser-83 and Ser-96 each carry the phosphoserine modification. Over residues 100 to 109 the composition is skewed to basic and acidic residues; sequence NSPEDKRAGG. Ser-101 carries the post-translational modification Phosphoserine; by DYRK2. Position 112 is a phosphoserine (Ser-112). A TOS motif motif is present at residues 114–118; it reads FEMDI.

This sequence belongs to the eIF4E-binding protein family. In terms of assembly, hypophosphorylated EIF4EBP1 competes with EIF4G1/EIF4G3 to interact with EIF4E; insulin stimulated MAP-kinase (MAPK1 and MAPK3) or mTORC1 phosphorylation of EIF4EBP1 causes dissociation of the complex allowing EIF4G1/EIF4G3 to bind and consequent initiation of translation. Interacts (via TOS motif) with RPTOR; promoting phosphorylation by mTORC1. Post-translationally, phosphorylated on serine and threonine residues in response to insulin, EGF and PDGF. Phosphorylation at Thr-37, Thr-46, Ser-65 and Thr-70, corresponding to the hyperphosphorylated form, is regulated by mTORC1 and abolishes binding to EIF4E. Ubiquitinated: when eIF4E levels are low, hypophosphorylated form is ubiquitinated by the BCR(KLHL25) complex, leading to its degradation and serving as a homeostatic mechanism to maintain translation and prevent eIF4E inhibition when eIF4E levels are low. Not ubiquitinated when hyperphosphorylated (at Thr-37, Thr-46, Ser-65 and Thr-70) or associated with eIF4E.

It is found in the cytoplasm. It localises to the nucleus. Repressor of translation initiation that regulates EIF4E activity by preventing its assembly into the eIF4F complex: hypophosphorylated form competes with EIF4G1/EIF4G3 and strongly binds to EIF4E, leading to repress translation. In contrast, hyperphosphorylated form dissociates from EIF4E, allowing interaction between EIF4G1/EIF4G3 and EIF4E, leading to initiation of translation. Mediates the regulation of protein translation by hormones, growth factors and other stimuli that signal through the MAP kinase and mTORC1 pathways. The chain is Eukaryotic translation initiation factor 4E-binding protein 1 (EIF4EBP1) from Homo sapiens (Human).